We begin with the raw amino-acid sequence, 322 residues long: Tubulin alpha-4 chain (322 aa).

Ser-15, Gly-19, Thr-20, Thr-54, Asn-81, and Asn-103 together coordinate GTP. Residue Glu-129 is part of the active site.

The protein belongs to the tubulin family. As to quaternary structure, dimer of alpha and beta chains. A typical microtubule is a hollow water-filled tube with an outer diameter of 25 nm and an inner diameter of 15 nM. Alpha-beta heterodimers associate head-to-tail to form protofilaments running lengthwise along the microtubule wall with the beta-tubulin subunit facing the microtubule plus end conferring a structural polarity. Microtubules usually have 13 protofilaments but different protofilament numbers can be found in some organisms and specialized cells. Requires Mg(2+) as cofactor. In terms of processing, some glutamate residues at the C-terminus are polyglycylated, resulting in polyglycine chains on the gamma-carboxyl group. Glycylation is mainly limited to tubulin incorporated into axonemes (cilia and flagella) whereas glutamylation is prevalent in neuronal cells, centrioles, axonemes, and the mitotic spindle. Both modifications can coexist on the same protein on adjacent residues, and lowering polyglycylation levels increases polyglutamylation, and reciprocally. The precise function of polyglycylation is still unclear. Some glutamate residues at the C-terminus are polyglutamylated, resulting in polyglutamate chains on the gamma-carboxyl group. Polyglutamylation plays a key role in microtubule severing by spastin (SPAST). SPAST preferentially recognizes and acts on microtubules decorated with short polyglutamate tails: severing activity by SPAST increases as the number of glutamates per tubulin rises from one to eight, but decreases beyond this glutamylation threshold.

Its subcellular location is the cytoplasm. It localises to the cytoskeleton. The catalysed reaction is GTP + H2O = GDP + phosphate + H(+). Functionally, tubulin is the major constituent of microtubules, a cylinder consisting of laterally associated linear protofilaments composed of alpha- and beta-tubulin heterodimers. Microtubules grow by the addition of GTP-tubulin dimers to the microtubule end, where a stabilizing cap forms. Below the cap, tubulin dimers are in GDP-bound state, owing to GTPase activity of alpha-tubulin. The protein is Tubulin alpha-4 chain of Gallus gallus (Chicken).